The following is a 305-amino-acid chain: Cell division control protein 2 homolog C (305 aa).

Positions 4-297 (YEKLEKVGEG…AKAALDHPYF (294 aa)) constitute a Protein kinase domain. Residues 10 to 18 (VGEGTYGKV) and lysine 33 each bind ATP. A Phosphothreonine modification is found at threonine 14. Tyrosine 15 is subject to Phosphotyrosine. Aspartate 138 functions as the Proton acceptor in the catalytic mechanism. Position 172 is a phosphothreonine; by CAK (threonine 172).

It belongs to the protein kinase superfamily. CMGC Ser/Thr protein kinase family. CDC2/CDKX subfamily.

The enzyme catalyses L-seryl-[protein] + ATP = O-phospho-L-seryl-[protein] + ADP + H(+). It carries out the reaction L-threonyl-[protein] + ATP = O-phospho-L-threonyl-[protein] + ADP + H(+). The catalysed reaction is [DNA-directed RNA polymerase] + ATP = phospho-[DNA-directed RNA polymerase] + ADP + H(+). Functionally, plays a key role in the control of the eukaryotic cell cycle. This is Cell division control protein 2 homolog C (CDC2C) from Antirrhinum majus (Garden snapdragon).